Reading from the N-terminus, the 395-residue chain is Carbamoyl phosphate synthase small chain (395 aa).

Residues 1-192 are CPSase; the sequence is MTYNLHPAIL…LQYKTDKMYG (192 aa). Residues serine 50, glycine 244, and glycine 246 each contribute to the L-glutamine site. Residues 196–383 enclose the Glutamine amidotransferase type-1 domain; sequence KIILIDFGVK…INLIKHFKQY (188 aa). Catalysis depends on cysteine 273, which acts as the Nucleophile. 5 residues coordinate L-glutamine: methionine 274, glutamine 277, asparagine 313, glycine 315, and phenylalanine 316. Active-site residues include histidine 356 and glutamate 358.

The protein belongs to the CarA family. As to quaternary structure, composed of two chains; the small (or glutamine) chain promotes the hydrolysis of glutamine to ammonia, which is used by the large (or ammonia) chain to synthesize carbamoyl phosphate. Tetramer of heterodimers (alpha,beta)4.

The protein resides in the plastid. The protein localises to the chloroplast. It carries out the reaction hydrogencarbonate + L-glutamine + 2 ATP + H2O = carbamoyl phosphate + L-glutamate + 2 ADP + phosphate + 2 H(+). It catalyses the reaction L-glutamine + H2O = L-glutamate + NH4(+). It participates in amino-acid biosynthesis; L-arginine biosynthesis; carbamoyl phosphate from bicarbonate: step 1/1. It functions in the pathway pyrimidine metabolism; UMP biosynthesis via de novo pathway; (S)-dihydroorotate from bicarbonate: step 1/3. Its function is as follows. Small subunit of the glutamine-dependent carbamoyl phosphate synthetase (CPSase). CPSase catalyzes the formation of carbamoyl phosphate from the ammonia moiety of glutamine, carbonate, and phosphate donated by ATP, constituting the first step of 2 biosynthetic pathways, one leading to arginine and/or urea and the other to pyrimidine nucleotides. The small subunit (glutamine amidotransferase) binds and cleaves glutamine to supply the large subunit with the substrate ammonia. This chain is Carbamoyl phosphate synthase small chain, found in Gracilaria tenuistipitata var. liui (Red alga).